Here is a 159-residue protein sequence, read N- to C-terminus: 2-C-methyl-D-erythritol 2,4-cyclodiphosphate synthase (159 aa).

A divalent metal cation is bound by residues aspartate 10 and histidine 12. 4-CDP-2-C-methyl-D-erythritol 2-phosphate-binding positions include 10–12 and 36–37; these read DVH and HS. Histidine 44 is a binding site for a divalent metal cation. Residues 58–60, 63–67, 102–108, 134–137, phenylalanine 141, and arginine 144 contribute to the 4-CDP-2-C-methyl-D-erythritol 2-phosphate site; these read DIG, FPDTD, AQVPKMA, and TTTE.

It belongs to the IspF family. Homotrimer. A divalent metal cation serves as cofactor.

The enzyme catalyses 4-CDP-2-C-methyl-D-erythritol 2-phosphate = 2-C-methyl-D-erythritol 2,4-cyclic diphosphate + CMP. Its pathway is isoprenoid biosynthesis; isopentenyl diphosphate biosynthesis via DXP pathway; isopentenyl diphosphate from 1-deoxy-D-xylulose 5-phosphate: step 4/6. Involved in the biosynthesis of isopentenyl diphosphate (IPP) and dimethylallyl diphosphate (DMAPP), two major building blocks of isoprenoid compounds. Catalyzes the conversion of 4-diphosphocytidyl-2-C-methyl-D-erythritol 2-phosphate (CDP-ME2P) to 2-C-methyl-D-erythritol 2,4-cyclodiphosphate (ME-CPP) with a corresponding release of cytidine 5-monophosphate (CMP). The chain is 2-C-methyl-D-erythritol 2,4-cyclodiphosphate synthase from Shewanella woodyi (strain ATCC 51908 / MS32).